Here is a 421-residue protein sequence, read N- to C-terminus: MKQNIFKSIADLRFAIFILLVIAAFSVIGTVIEQDQSIETYKLNYPLTNRVFGFLSWDIILKFGLDHVYKTWWFITLILLFGISLLTCTLLQQFPSLKIARRCQFFRTTQQFCRLNISTNLKHLSFSQLLFKIKENNYSIFQQKNIIYCYKGLIGRIAPIIVHFSMIIILIGAIIGSLSGFKAQEIVPKTETFHIQNVLNNGQFTFIPKVSVRINDFWITYTKQTTITQFYSDLSILNIDGNEIDRQTIFVNSPAKYNGIDYYQTDWNIIGLRLRMQDSSIFQYPFINLPNTQEKLWLTWISTNQQLNDGLTILIDNLQGYCSVYNKVGKFIGNLELNESLKIENPITLIDILSSTGLQIKADPGILLIYLGFLFLMISTLISYITYSQIWIVQDKNKIFIGGNTTRATFEFELEFLKLIK.

3 helical membrane-spanning segments follow: residues 12 to 32 (LRFA…GTVI), 71 to 91 (TWWF…CTLL), and 157 to 177 (IAPI…IIGS).

The protein belongs to the Ccs1/CcsB family. In terms of assembly, may interact with CcsA.

It is found in the plastid. Its subcellular location is the chloroplast thylakoid membrane. Required during biogenesis of c-type cytochromes (cytochrome c6 and cytochrome f) at the step of heme attachment. The protein is Cytochrome c biogenesis protein Ccs1 of Thalassiosira pseudonana (Marine diatom).